A 68-amino-acid polypeptide reads, in one-letter code: DNA-directed RNA polymerase subunit omega (68 aa).

It belongs to the RNA polymerase subunit omega family. As to quaternary structure, the RNAP catalytic core consists of 2 alpha, 1 beta, 1 beta' and 1 omega subunit. When a sigma factor is associated with the core the holoenzyme is formed, which can initiate transcription.

It catalyses the reaction RNA(n) + a ribonucleoside 5'-triphosphate = RNA(n+1) + diphosphate. In terms of biological role, promotes RNA polymerase assembly. Latches the N- and C-terminal regions of the beta' subunit thereby facilitating its interaction with the beta and alpha subunits. This Citrifermentans bemidjiense (strain ATCC BAA-1014 / DSM 16622 / JCM 12645 / Bem) (Geobacter bemidjiensis) protein is DNA-directed RNA polymerase subunit omega.